Reading from the N-terminus, the 324-residue chain is Polycomb complex protein BMI-1-B (324 aa).

An RING-type zinc finger spans residues 18–57 (CVLCGGYFIDATTIVECLHSFCKMCIVRYLETSKYCPICD). Residues 81–95 (KLVPGLFKNEMKRRR) carry the Nuclear localization signal motif. Positions 232–324 (IKLSSPRNDM…TSHNGSNSLG (93 aa)) are disordered. The segment covering 256-279 (DKPNSPSIVAAPSTSSSMPSPNTP) has biased composition (low complexity). Composition is skewed to polar residues over residues 280–295 (VQST…TING) and 303–324 (NGQT…NSLG).

Component of a PRC1-like complex. Homodimer. Interacts with cbx2.

It is found in the nucleus. Functionally, component of a Polycomb group (PcG) multiprotein PRC1-like complex, a complex class required to maintain the transcriptionally repressive state of many genes, including Hox genes, throughout development. PcG PRC1 complex acts via chromatin remodeling and modification of histones; it mediates monoubiquitination of histone H2A 'Lys-119', rendering chromatin heritably changed in its expressibility. In the PRC1 complex, it is required to stimulate the E3 ubiquitin-protein ligase activity of rnf2. This is Polycomb complex protein BMI-1-B (bmi1b) from Danio rerio (Zebrafish).